Reading from the N-terminus, the 126-residue chain is Histone H2B 1/2/3/4/6 (126 aa).

Residues 1-12 (MPEPAKSAPAPK) are compositionally biased toward low complexity. Residues 1–36 (MPEPAKSAPAPKKGSKKAVTKTQKKGDKKRKKSRKE) are disordered. Residues Lys-6 and Lys-13 each carry the N6-acetyllysine modification. The segment covering 13-34 (KGSKKAVTKTQKKGDKKRKKSR) has biased composition (basic residues). Phosphoserine is present on Ser-15. An N6-acetyllysine mark is found at Lys-16 and Lys-21. A Glycyl lysine isopeptide (Lys-Gly) (interchain with G-Cter in ubiquitin) cross-link involves residue Lys-121.

Belongs to the histone H2B family. The nucleosome is a histone octamer containing two molecules each of H2A, H2B, H3 and H4 assembled in one H3-H4 heterotetramer and two H2A-H2B heterodimers. The octamer wraps approximately 147 bp of DNA. In terms of processing, monoubiquitination of Lys-121 by the BRE1 gives a specific tag for epigenetic transcriptional activation and is also prerequisite for histone H3 'Lys-4' and 'Lys-79' methylation. Phosphorylated on Ser-15 during apoptosis; which facilitates apoptotic chromatin condensation.

The protein resides in the nucleus. The protein localises to the chromosome. Its function is as follows. Core component of nucleosome. Nucleosomes wrap and compact DNA into chromatin, limiting DNA accessibility to the cellular machineries which require DNA as a template. Histones thereby play a central role in transcription regulation, DNA repair, DNA replication and chromosomal stability. DNA accessibility is regulated via a complex set of post-translational modifications of histones, also called histone code, and nucleosome remodeling. In terms of biological role, has broad-spectrum antibacterial activity. May be important in the antimicrobial defenses of chick reproductive system during follicle development in the ovary and egg formation in the oviduct. The polypeptide is Histone H2B 1/2/3/4/6 (H2B-I) (Gallus gallus (Chicken)).